Consider the following 23-residue polypeptide: 48 kDa cell wall protein (23 aa).

It is found in the secreted. The protein resides in the cell wall. This chain is 48 kDa cell wall protein, found in Nicotiana tabacum (Common tobacco).